The sequence spans 338 residues: Lipoate-protein ligase A (338 aa).

One can recognise a BPL/LPL catalytic domain in the interval 29–216 (PATQRVLFLW…AFFEHYSERV (188 aa)). ATP is bound by residues Arg-71, 76 to 79 (GAVF), and Lys-134. Residue Lys-134 coordinates (R)-lipoate.

It belongs to the LplA family. As to quaternary structure, monomer.

The protein resides in the cytoplasm. The catalysed reaction is L-lysyl-[lipoyl-carrier protein] + (R)-lipoate + ATP = N(6)-[(R)-lipoyl]-L-lysyl-[lipoyl-carrier protein] + AMP + diphosphate + H(+). It participates in protein modification; protein lipoylation via exogenous pathway; protein N(6)-(lipoyl)lysine from lipoate: step 1/2. It functions in the pathway protein modification; protein lipoylation via exogenous pathway; protein N(6)-(lipoyl)lysine from lipoate: step 2/2. Catalyzes both the ATP-dependent activation of exogenously supplied lipoate to lipoyl-AMP and the transfer of the activated lipoyl onto the lipoyl domains of lipoate-dependent enzymes. This chain is Lipoate-protein ligase A, found in Enterobacter sp. (strain 638).